The primary structure comprises 493 residues: Glycerol kinase 2 (493 aa).

An ADP-binding site is contributed by Ser-12. 2 residues coordinate ATP: Ser-12 and Thr-13. Sn-glycerol 3-phosphate is bound at residue Ser-12. Lys-16 lines the ADP pocket. Sn-glycerol 3-phosphate-binding residues include Arg-82, Glu-83, Tyr-134, and Asp-243. Glycerol is bound by residues Arg-82, Glu-83, Tyr-134, Asp-243, and Gln-244. ADP-binding residues include Thr-265 and Gly-308. Positions 265, 308, and 312 each coordinate ATP. Asn-413 contributes to the ADP binding site.

It belongs to the FGGY kinase family. As to quaternary structure, homotetramer and homodimer (in equilibrium).

It catalyses the reaction glycerol + ATP = sn-glycerol 3-phosphate + ADP + H(+). Its pathway is polyol metabolism; glycerol degradation via glycerol kinase pathway; sn-glycerol 3-phosphate from glycerol: step 1/1. Its activity is regulated as follows. Activated by phosphorylation and inhibited by fructose 1,6-bisphosphate (FBP). In terms of biological role, key enzyme in the regulation of glycerol uptake and metabolism. Catalyzes the phosphorylation of glycerol to yield sn-glycerol 3-phosphate. This is Glycerol kinase 2 from Clostridium tetani (strain Massachusetts / E88).